Reading from the N-terminus, the 239-residue chain is MARGCLCCVKYMLFLFNLLFWLGGCGLLGVGVWLSVSQGSFATLSPSFPSISAANLIITLGAVIMVTGFLGCLGAIKENKCLLLSFFITLLVILLAELILLILFFVYTDNVSENARQDLKEGLALYSTNNNAGLRNAWNTIQTEWHCCGVNGYTDWHTALQEKVVPDHCCQDIYQDCGRNATNQFWTRGCYEKVEEWLDDNKHLLGTIAMCVLVIQLLGMAFSMTLYQQIHRSGKKYEA.

Over 1–12 (MARGCLCCVKYM) the chain is Cytoplasmic. The helical transmembrane segment at 13–33 (LFLFNLLFWLGGCGLLGVGVW) threads the bilayer. Residues 34 to 55 (LSVSQGSFATLSPSFPSISAAN) are Extracellular-facing. A helical transmembrane segment spans residues 56–76 (LIITLGAVIMVTGFLGCLGAI). At 77 to 85 (KENKCLLLS) the chain is on the cytoplasmic side. Residues 86–106 (FFITLLVILLAELILLILFFV) traverse the membrane as a helical segment. The Extracellular segment spans residues 107–203 (YTDNVSENAR…VEEWLDDNKH (97 aa)). Asn-110 and Asn-180 each carry an N-linked (GlcNAc...) asparagine glycan. The helical transmembrane segment at 204–224 (LLGTIAMCVLVIQLLGMAFSM) threads the bilayer. The Cytoplasmic portion of the chain corresponds to 225 to 239 (TLYQQIHRSGKKYEA).

This sequence belongs to the tetraspanin (TM4SF) family.

The protein localises to the membrane. The sequence is that of Tetraspanin-9 (tspan9) from Salmo salar (Atlantic salmon).